Here is a 214-residue protein sequence, read N- to C-terminus: Large ribosomal subunit protein uL3 (214 aa).

Positions 131–155 are disordered; it reads GAQRTSHGNSRSHRVPGSIGMAQDP. Position 153 is an N5-methylglutamine (glutamine 153).

Belongs to the universal ribosomal protein uL3 family. Part of the 50S ribosomal subunit. Forms a cluster with proteins L14 and L19. Methylated by PrmB.

Its function is as follows. One of the primary rRNA binding proteins, it binds directly near the 3'-end of the 23S rRNA, where it nucleates assembly of the 50S subunit. This chain is Large ribosomal subunit protein uL3, found in Neisseria gonorrhoeae (strain ATCC 700825 / FA 1090).